We begin with the raw amino-acid sequence, 94 residues long: Integration host factor subunit beta (94 aa).

The protein belongs to the bacterial histone-like protein family. Heterodimer of an alpha and a beta chain.

Its function is as follows. This protein is one of the two subunits of integration host factor, a specific DNA-binding protein that functions in genetic recombination as well as in transcriptional and translational control. This is Integration host factor subunit beta from Pseudomonas paraeruginosa (strain DSM 24068 / PA7) (Pseudomonas aeruginosa (strain PA7)).